Reading from the N-terminus, the 578-residue chain is Suppressor of smlA (578 aa).

In terms of biological role, involved in regulation of group size of aggregation streams. The sequence is that of Suppressor of smlA (sslA1) from Dictyostelium discoideum (Social amoeba).